A 61-amino-acid chain; its full sequence is Small ribosomal subunit protein uS14 (61 aa).

4 residues coordinate Zn(2+): Cys-24, Cys-27, Cys-40, and Cys-43.

It belongs to the universal ribosomal protein uS14 family. Zinc-binding uS14 subfamily. In terms of assembly, part of the 30S ribosomal subunit. Contacts proteins S3 and S10. Zn(2+) is required as a cofactor.

Binds 16S rRNA, required for the assembly of 30S particles and may also be responsible for determining the conformation of the 16S rRNA at the A site. In Desulfotalea psychrophila (strain LSv54 / DSM 12343), this protein is Small ribosomal subunit protein uS14.